Here is a 232-residue protein sequence, read N- to C-terminus: Sugar fermentation stimulation protein homolog (232 aa).

Belongs to the SfsA family.

This Geobacter metallireducens (strain ATCC 53774 / DSM 7210 / GS-15) protein is Sugar fermentation stimulation protein homolog.